We begin with the raw amino-acid sequence, 134 residues long: Large ribosomal subunit protein bL17 (134 aa).

Belongs to the bacterial ribosomal protein bL17 family. Part of the 50S ribosomal subunit. Contacts protein L32.

The chain is Large ribosomal subunit protein bL17 from Anaplasma marginale (strain Florida).